Here is a 100-residue protein sequence, read N- to C-terminus: uncharacterized protein (100 aa).

In terms of domain architecture, HTH arsR-type spans M1–I100. Positions V44–R67 form a DNA-binding region, H-T-H motif.

This is an uncharacterized protein from Bacillus subtilis (strain 168).